The following is a 263-amino-acid chain: MHNSYSLSKRLVLVLFLAVVATQLFLIRNVSSLNLTNAYLHHKCLISQGKYKPGSQYEKNLNSHIDLIINSTFRNGFGHMTTAMGSPNMVNIIFQCRGDSYQSKCRSCFAAGISGEMRCPRNKGGIIWFDQCFVEITAIEVMEVNYDNNFYMHNPNKVMGDAKSFNKETMAFLEQLALEATRKDNMEDGMMALYSAREKMVGTKKLYAMVQCTRDVFMFKTMCKECLERIISQYPKCCDGKQGGRVLGTSCNFRYEFYPFLRT.

An N-terminal signal peptide occupies residues 1–32; the sequence is MHNSYSLSKRLVLVLFLAVVATQLFLIRNVSS. Gnk2-homologous domains lie at 39-141 and 146-260; these read YLHH…AIEV and YDNN…FYPF.

The protein belongs to the cysteine-rich repeat secretory protein family.

The protein localises to the secreted. In Arabidopsis thaliana (Mouse-ear cress), this protein is Putative cysteine-rich repeat secretory protein 31 (CRRSP31).